A 193-amino-acid chain; its full sequence is Ion-translocating oxidoreductase complex subunit A (193 aa).

A run of 6 helical transmembrane segments spans residues 5–25, 47–67, 72–92, 102–122, 134–154, and 171–191; these read LLLF…FLGL, FVMT…LIPL, LRTM…EMVV, LLGI…VALL, ALYG…FAAI, and AIAL…SGLV.

It belongs to the NqrDE/RnfAE family. The complex is composed of six subunits: RsxA, RsxB, RsxC, RsxD, RsxE and RsxG.

Its subcellular location is the cell inner membrane. Its function is as follows. Part of a membrane-bound complex that couples electron transfer with translocation of ions across the membrane. Required to maintain the reduced state of SoxR. The sequence is that of Ion-translocating oxidoreductase complex subunit A from Escherichia coli O45:K1 (strain S88 / ExPEC).